Here is a 227-residue protein sequence, read N- to C-terminus: MICOS complex subunit Mic19 (227 aa).

Residue glycine 2 is the site of N-myristoyl glycine attachment. Serine 29 is modified (phosphoserine). The tract at residues 32 to 57 (VIDRMKESSPSGSKSQRYSSVYGASV) is disordered. The segment covering 39-50 (SSPSGSKSQRYS) has biased composition (polar residues). Tyrosine 49 carries the phosphotyrosine modification. Phosphoserine is present on residues serine 50, serine 51, serine 56, and serine 58. A disordered region spans residues 73-92 (EQAKKESEHQRRLKQARDLE). Lysine 142 is modified (N6-acetyllysine). The CHCH domain occupies 180–222 (HPVCADLQTKILQCYRQNTQQTLSCSALASQYMHCVNHAKQSM). 2 consecutive short sequence motifs (cx9C motif) follow at residues 183 to 193 (CADLQTKILQC) and 204 to 214 (CSALASQYMHC). 2 disulfide bridges follow: cysteine 183–cysteine 214 and cysteine 193–cysteine 204.

It belongs to the MICOS complex subunit Mic19 family. Metazoan Mic19 subfamily. Component of the mitochondrial contact site and cristae organizing system (MICOS) complex, composed of at least MICOS10/MIC10, CHCHD3/MIC19, CHCHD6/MIC25, APOOL/MIC27, IMMT/MIC60, APOO/MIC23/MIC26 and MICOS13/MIC13. This complex was also known under the names MINOS or MitOS complex. The MICOS complex associates with mitochondrial outer membrane proteins SAMM50, MTX1 and MTX2 (together described as components of the mitochondrial outer membrane sorting assembly machinery (SAM) complex) and DNAJC11, mitochondrial inner membrane protein TMEM11 and with HSPA9. The MICOS and SAM complexes together with DNAJC11 are part of a large protein complex spanning both membranes termed the mitochondrial intermembrane space bridging (MIB) complex. Interacts with HSPA1A/HSPA1B and OPA1, preferentially with the soluble OPA1 form.

It is found in the mitochondrion inner membrane. Its subcellular location is the cytoplasm. It localises to the nucleus. The protein localises to the mitochondrion. Component of the MICOS complex, a large protein complex of the mitochondrial inner membrane that plays crucial roles in the maintenance of crista junctions, inner membrane architecture, and formation of contact sites to the outer membrane. Has also been shown to function as a transcription factor which binds to the BAG1 promoter and represses BAG1 transcription. Plays an important role in the maintenance of the MICOS complex stability and the mitochondrial cristae morphology. This chain is MICOS complex subunit Mic19 (Chchd3), found in Mus musculus (Mouse).